Reading from the N-terminus, the 265-residue chain is MNITTISHLRKYKQRQQKFAAITAYDAAFASLFEQNGIQVMLVGDSLGMTIQGNDSTLPVTLEDMIYHTRCVRRGAPYCLLIADLPFMCYATLYQAYDNAAALMRAGANIVKLEGGGCWVTKIVRCLTDRAVPVCCHLGLTPQSVNILGGYKIQGRDKDSADRILSESIALELAGAQMLVLECVPITLSERIADVLTIPVIGIGAGPVTDGQILVMQDILGITGNRIPSFAKNFLTDSRDIPTAIQLYVQEVETGKFPAVQHYFS.

Positions 45 and 84 each coordinate Mg(2+). 3-methyl-2-oxobutanoate-binding positions include 45-46 (DS), Asp-84, and Lys-112. Glu-114 provides a ligand contact to Mg(2+). Glu-182 (proton acceptor) is an active-site residue.

It belongs to the PanB family. In terms of assembly, homodecamer; pentamer of dimers. The cofactor is Mg(2+).

The protein resides in the cytoplasm. It catalyses the reaction 3-methyl-2-oxobutanoate + (6R)-5,10-methylene-5,6,7,8-tetrahydrofolate + H2O = 2-dehydropantoate + (6S)-5,6,7,8-tetrahydrofolate. Its pathway is cofactor biosynthesis; (R)-pantothenate biosynthesis; (R)-pantoate from 3-methyl-2-oxobutanoate: step 1/2. In terms of biological role, catalyzes the reversible reaction in which hydroxymethyl group from 5,10-methylenetetrahydrofolate is transferred onto alpha-ketoisovalerate to form ketopantoate. The sequence is that of 3-methyl-2-oxobutanoate hydroxymethyltransferase from Baumannia cicadellinicola subsp. Homalodisca coagulata.